Here is a 145-residue protein sequence, read N- to C-terminus: MKKILVLHGPNLNLLGSREPSIYGHASLTQINGDLIQEADNAGIRLSCFQSNAEAELIQAVHQAGIDKINYIIINPAAFTHTSIALRDALSAVAIPFIEVHLSNIFSRETFRHHSYFSDIAVGVISGLGTKGYLLALQAIIKELK.

The active-site Proton acceptor is the Tyr23. Substrate is bound by residues Asn75, His81, and Asp88. The Proton donor role is filled by His101. Substrate is bound by residues 102-103 and Arg112; that span reads LS.

This sequence belongs to the type-II 3-dehydroquinase family. As to quaternary structure, homododecamer.

It carries out the reaction 3-dehydroquinate = 3-dehydroshikimate + H2O. It participates in metabolic intermediate biosynthesis; chorismate biosynthesis; chorismate from D-erythrose 4-phosphate and phosphoenolpyruvate: step 3/7. Its function is as follows. Catalyzes a trans-dehydration via an enolate intermediate. The protein is 3-dehydroquinate dehydratase of Legionella pneumophila (strain Lens).